A 376-amino-acid chain; its full sequence is Chaperone protein DnaJ (376 aa).

Residues 5-70 (DFYEVLGVGR…DKKAAYDQFG (66 aa)) enclose the J domain. Residues 132-210 (GLSKELRIPT…CHGEGRVEKS (79 aa)) form a CR-type zinc finger. Zn(2+)-binding residues include cysteine 145, cysteine 148, cysteine 162, cysteine 165, cysteine 184, cysteine 187, cysteine 198, and cysteine 201. CXXCXGXG motif repeat units lie at residues 145–152 (CEPCDGSG), 162–169 (CGTCHGQG), 184–191 (CPTCHGRG), and 198–205 (CNKCHGEG).

It belongs to the DnaJ family. Homodimer. It depends on Zn(2+) as a cofactor.

Its subcellular location is the cytoplasm. In terms of biological role, participates actively in the response to hyperosmotic and heat shock by preventing the aggregation of stress-denatured proteins and by disaggregating proteins, also in an autonomous, DnaK-independent fashion. Unfolded proteins bind initially to DnaJ; upon interaction with the DnaJ-bound protein, DnaK hydrolyzes its bound ATP, resulting in the formation of a stable complex. GrpE releases ADP from DnaK; ATP binding to DnaK triggers the release of the substrate protein, thus completing the reaction cycle. Several rounds of ATP-dependent interactions between DnaJ, DnaK and GrpE are required for fully efficient folding. Also involved, together with DnaK and GrpE, in the DNA replication of plasmids through activation of initiation proteins. This Shewanella piezotolerans (strain WP3 / JCM 13877) protein is Chaperone protein DnaJ.